The primary structure comprises 446 residues: Phosphoglucosamine mutase (446 aa).

Catalysis depends on Ser-103, which acts as the Phosphoserine intermediate. Mg(2+) is bound by residues Ser-103, Asp-242, Asp-244, and Asp-246. Phosphoserine is present on Ser-103.

This sequence belongs to the phosphohexose mutase family. It depends on Mg(2+) as a cofactor. Post-translationally, activated by phosphorylation.

The enzyme catalyses alpha-D-glucosamine 1-phosphate = D-glucosamine 6-phosphate. Functionally, catalyzes the conversion of glucosamine-6-phosphate to glucosamine-1-phosphate. This is Phosphoglucosamine mutase from Corynebacterium urealyticum (strain ATCC 43042 / DSM 7109).